The following is a 424-amino-acid chain: Anaerobic glycerol-3-phosphate dehydrogenase subunit B (424 aa).

Belongs to the anaerobic G-3-P dehydrogenase subunit B family. As to quaternary structure, composed of a catalytic GlpA/B dimer and of membrane bound GlpC. The cofactor is FMN.

It catalyses the reaction a quinone + sn-glycerol 3-phosphate = dihydroxyacetone phosphate + a quinol. The protein operates within polyol metabolism; glycerol degradation via glycerol kinase pathway; glycerone phosphate from sn-glycerol 3-phosphate (anaerobic route): step 1/1. Conversion of glycerol 3-phosphate to dihydroxyacetone. Uses fumarate or nitrate as electron acceptor. The protein is Anaerobic glycerol-3-phosphate dehydrogenase subunit B of Yersinia enterocolitica serotype O:8 / biotype 1B (strain NCTC 13174 / 8081).